The primary structure comprises 196 residues: ATP-dependent Clp protease proteolytic subunit (196 aa).

The active-site Nucleophile is the Ser-101. The active site involves His-126.

Belongs to the peptidase S14 family. Component of the chloroplastic Clp protease core complex.

Its subcellular location is the plastid. The protein localises to the chloroplast stroma. The catalysed reaction is Hydrolysis of proteins to small peptides in the presence of ATP and magnesium. alpha-casein is the usual test substrate. In the absence of ATP, only oligopeptides shorter than five residues are hydrolyzed (such as succinyl-Leu-Tyr-|-NHMec, and Leu-Tyr-Leu-|-Tyr-Trp, in which cleavage of the -Tyr-|-Leu- and -Tyr-|-Trp bonds also occurs).. Functionally, cleaves peptides in various proteins in a process that requires ATP hydrolysis. Has a chymotrypsin-like activity. Plays a major role in the degradation of misfolded proteins. The polypeptide is ATP-dependent Clp protease proteolytic subunit (Coffea arabica (Arabian coffee)).